A 256-amino-acid polypeptide reads, in one-letter code: Pimeloyl-[acyl-carrier protein] methyl ester esterase (256 aa).

The AB hydrolase-1 domain maps to 15–242 (HLVLLHGWGL…AAHAPFISHP (228 aa)). Residues Trp-22, 82-83 (SL), and 143-147 (FLALQ) contribute to the substrate site. Ser-82 serves as the catalytic Nucleophile. Active-site residues include Asp-207 and His-235. His-235 is a binding site for substrate.

The protein belongs to the AB hydrolase superfamily. Carboxylesterase BioH family. In terms of assembly, monomer.

The protein resides in the cytoplasm. The enzyme catalyses 6-carboxyhexanoyl-[ACP] methyl ester + H2O = 6-carboxyhexanoyl-[ACP] + methanol + H(+). It functions in the pathway cofactor biosynthesis; biotin biosynthesis. Functionally, the physiological role of BioH is to remove the methyl group introduced by BioC when the pimeloyl moiety is complete. It allows to synthesize pimeloyl-ACP via the fatty acid synthetic pathway through the hydrolysis of the ester bonds of pimeloyl-ACP esters. The polypeptide is Pimeloyl-[acyl-carrier protein] methyl ester esterase (Shigella boydii serotype 4 (strain Sb227)).